A 311-amino-acid polypeptide reads, in one-letter code: Aspartate carbamoyltransferase catalytic subunit (311 aa).

Residues arginine 55 and threonine 56 each contribute to the carbamoyl phosphate site. Lysine 85 contacts L-aspartate. Carbamoyl phosphate is bound by residues arginine 106, histidine 135, and glutamine 138. Residues arginine 168 and arginine 230 each coordinate L-aspartate. Carbamoyl phosphate-binding residues include leucine 268 and proline 269.

It belongs to the aspartate/ornithine carbamoyltransferase superfamily. ATCase family. Heterododecamer (2C3:3R2) of six catalytic PyrB chains organized as two trimers (C3), and six regulatory PyrI chains organized as three dimers (R2).

The catalysed reaction is carbamoyl phosphate + L-aspartate = N-carbamoyl-L-aspartate + phosphate + H(+). It participates in pyrimidine metabolism; UMP biosynthesis via de novo pathway; (S)-dihydroorotate from bicarbonate: step 2/3. In terms of biological role, catalyzes the condensation of carbamoyl phosphate and aspartate to form carbamoyl aspartate and inorganic phosphate, the committed step in the de novo pyrimidine nucleotide biosynthesis pathway. This is Aspartate carbamoyltransferase catalytic subunit from Proteus mirabilis (strain HI4320).